Consider the following 391-residue polypeptide: MMITKQSYQRFALMRVFVFSLSAFIFNTTEFVPVALLSDIAKSFEMESATVGLMITAYAWVVSLGSLPLMLLSAKIERKRLLLFLFALFIFSHILSALAWNFWVLLLSRMGIAFAHSIFWSITASLVIRVAPRNKKQQALGLLALGSSLAMILGLPLGRIIGQILDWRSTFGVIGGVATLIMLLMWKLLPHLPSRNAGTLASVPILMKRPLLVGIYLLVIMVISGHFTTYSYIEPFIIQISQFSPDITTLMLFVFGLAGVVGSFLFGRLYAKNSRKFIAFAMVLVICPQLLLFVFKNLEWVIFLQIFLWGIGITSLTIALQMRVLQLAPDATDVASAIFSGSYNVGIGSGALFGSIVIHQLGLEYIGFVGGALGLLALFWLRFITIKFKKT.

A run of 12 helical transmembrane segments spans residues 16–36, 51–71, 82–102, 110–130, 138–158, 170–190, 210–230, 247–267, 277–297, 300–320, 338–358, and 361–381; these read VFVFSLSAFIFNTTEFVPVAL, VGLMITAYAWVVSLGSLPLML, LLFLFALFIFSHILSALAWNF, MGIAFAHSIFWSITASLVIRV, QALGLLALGSSLAMILGLPLG, TFGVIGGVATLIMLLMWKLLP, PLLVGIYLLVIMVISGHFTTY, ITTLMLFVFGLAGVVGSFLFG, FIAFAMVLVICPQLLLFVFKN, WVIFLQIFLWGIGITSLTIAL, IFSGSYNVGIGSGALFGSIVI, and LGLEYIGFVGGALGLLALFWL.

Belongs to the major facilitator superfamily. SotB (TC 2.A.1.2) family.

It localises to the cell inner membrane. Involved in the efflux of sugars. The physiological role may be the reduction of the intracellular concentration of toxic sugars or sugar metabolites. The polypeptide is Probable sugar efflux transporter (Helicobacter pylori (strain J99 / ATCC 700824) (Campylobacter pylori J99)).